Reading from the N-terminus, the 284-residue chain is Release factor glutamine methyltransferase (284 aa).

S-adenosyl-L-methionine contacts are provided by residues 125-129, glutamate 148, and asparagine 190; that span reads GVGSG. 190 to 193 is a substrate binding site; the sequence is NPPY.

The protein belongs to the protein N5-glutamine methyltransferase family. PrmC subfamily.

The enzyme catalyses L-glutaminyl-[peptide chain release factor] + S-adenosyl-L-methionine = N(5)-methyl-L-glutaminyl-[peptide chain release factor] + S-adenosyl-L-homocysteine + H(+). In terms of biological role, methylates the class 1 translation termination release factors RF1/PrfA and RF2/PrfB on the glutamine residue of the universally conserved GGQ motif. This Geobacter sulfurreducens (strain ATCC 51573 / DSM 12127 / PCA) protein is Release factor glutamine methyltransferase.